We begin with the raw amino-acid sequence, 217 residues long: Adenylate kinase (217 aa).

10-15 is a binding site for ATP; the sequence is GAGKGT. An NMP region spans residues 30-59; it reads STGDMFRAAIKEGTELGLQAKSFMDQGALV. Residues T31, R36, 57–59, 85–88, and Q92 contribute to the AMP site; these read ALV and GFPR. The interval 126-163 is LID; the sequence is GRRICKTCGASYHLIFNPPAEEGKCDKDGGELYTRADD. Position 127 (R127) interacts with ATP. Residues C130 and C133 each coordinate Zn(2+). 136-137 lines the ATP pocket; the sequence is SY. C150 and D153 together coordinate Zn(2+). R160 and R171 together coordinate AMP. Q199 lines the ATP pocket.

It belongs to the adenylate kinase family. In terms of assembly, monomer.

The protein localises to the cytoplasm. It carries out the reaction AMP + ATP = 2 ADP. The protein operates within purine metabolism; AMP biosynthesis via salvage pathway; AMP from ADP: step 1/1. Catalyzes the reversible transfer of the terminal phosphate group between ATP and AMP. Plays an important role in cellular energy homeostasis and in adenine nucleotide metabolism. This chain is Adenylate kinase, found in Lysinibacillus sphaericus (strain C3-41).